The following is a 134-amino-acid chain: Profilin-4 (134 aa).

Cysteines 13 and 118 form a disulfide. The Involved in PIP2 interaction motif lies at 84 to 100 (AVIRGKKGSGGITIKKT). Residue threonine 114 is modified to Phosphothreonine.

It belongs to the profilin family. In terms of assembly, occurs in many kinds of cells as a complex with monomeric actin in a 1:1 ratio. Post-translationally, phosphorylated by MAP kinases.

Its subcellular location is the cytoplasm. It localises to the cytoskeleton. Binds to actin and affects the structure of the cytoskeleton. At high concentrations, profilin prevents the polymerization of actin, whereas it enhances it at low concentrations. The protein is Profilin-4 of Olea europaea (Common olive).